The chain runs to 379 residues: Queuine tRNA-ribosyltransferase (379 aa).

The Proton acceptor role is filled by aspartate 94. Substrate is bound by residues 94–98 (DSGGF), aspartate 148, glutamine 191, and glycine 218. The interval 249 to 255 (GVGSPDS) is RNA binding. The Nucleophile role is filled by aspartate 268. Residues 273–277 (TRIGR) form an RNA binding; important for wobble base 34 recognition region. Residues cysteine 306, cysteine 308, cysteine 311, and histidine 337 each coordinate Zn(2+).

The protein belongs to the queuine tRNA-ribosyltransferase family. Homodimer. Within each dimer, one monomer is responsible for RNA recognition and catalysis, while the other monomer binds to the replacement base PreQ1. It depends on Zn(2+) as a cofactor.

It catalyses the reaction 7-aminomethyl-7-carbaguanine + guanosine(34) in tRNA = 7-aminomethyl-7-carbaguanosine(34) in tRNA + guanine. The protein operates within tRNA modification; tRNA-queuosine biosynthesis. Functionally, catalyzes the base-exchange of a guanine (G) residue with the queuine precursor 7-aminomethyl-7-deazaguanine (PreQ1) at position 34 (anticodon wobble position) in tRNAs with GU(N) anticodons (tRNA-Asp, -Asn, -His and -Tyr). Catalysis occurs through a double-displacement mechanism. The nucleophile active site attacks the C1' of nucleotide 34 to detach the guanine base from the RNA, forming a covalent enzyme-RNA intermediate. The proton acceptor active site deprotonates the incoming PreQ1, allowing a nucleophilic attack on the C1' of the ribose to form the product. After dissociation, two additional enzymatic reactions on the tRNA convert PreQ1 to queuine (Q), resulting in the hypermodified nucleoside queuosine (7-(((4,5-cis-dihydroxy-2-cyclopenten-1-yl)amino)methyl)-7-deazaguanosine). This chain is Queuine tRNA-ribosyltransferase, found in Anoxybacillus flavithermus (strain DSM 21510 / WK1).